The sequence spans 396 residues: Phosphoglycerate kinase (396 aa).

Substrate contacts are provided by residues 22–24 (DLN), Arg-37, 60–63 (HFGR), Arg-118, and Arg-151. ATP is bound by residues Lys-201, Glu-323, and 353–356 (GGDT).

It belongs to the phosphoglycerate kinase family. As to quaternary structure, monomer.

Its subcellular location is the cytoplasm. It catalyses the reaction (2R)-3-phosphoglycerate + ATP = (2R)-3-phospho-glyceroyl phosphate + ADP. It participates in carbohydrate degradation; glycolysis; pyruvate from D-glyceraldehyde 3-phosphate: step 2/5. This Azorhizobium caulinodans (strain ATCC 43989 / DSM 5975 / JCM 20966 / LMG 6465 / NBRC 14845 / NCIMB 13405 / ORS 571) protein is Phosphoglycerate kinase.